A 68-amino-acid polypeptide reads, in one-letter code: Large ribosomal subunit protein uL29 (68 aa).

The protein belongs to the universal ribosomal protein uL29 family.

This Thermoplasma acidophilum (strain ATCC 25905 / DSM 1728 / JCM 9062 / NBRC 15155 / AMRC-C165) protein is Large ribosomal subunit protein uL29 (rpl29).